Consider the following 97-residue polypeptide: Large ribosomal subunit protein eL21 (97 aa).

The protein belongs to the eukaryotic ribosomal protein eL21 family.

The sequence is that of Large ribosomal subunit protein eL21 from Methanospirillum hungatei JF-1 (strain ATCC 27890 / DSM 864 / NBRC 100397 / JF-1).